Reading from the N-terminus, the 195-residue chain is Imidazoleglycerol-phosphate dehydratase (195 aa).

Belongs to the imidazoleglycerol-phosphate dehydratase family.

It localises to the cytoplasm. It carries out the reaction D-erythro-1-(imidazol-4-yl)glycerol 3-phosphate = 3-(imidazol-4-yl)-2-oxopropyl phosphate + H2O. The protein operates within amino-acid biosynthesis; L-histidine biosynthesis; L-histidine from 5-phospho-alpha-D-ribose 1-diphosphate: step 6/9. In Roseobacter denitrificans (strain ATCC 33942 / OCh 114) (Erythrobacter sp. (strain OCh 114)), this protein is Imidazoleglycerol-phosphate dehydratase.